Consider the following 387-residue polypeptide: Protein RecA, chromosomal (387 aa).

80-87 contacts ATP; the sequence is GPESSGKT. The tract at residues 352-387 is disordered; the sequence is EVAETTEDTSTKAKATKAKKEEKVVETEEIELELED. Residues 378-387 show a composition bias toward acidic residues; that stretch reads TEEIELELED.

It belongs to the RecA family.

It localises to the cytoplasm. Can catalyze the hydrolysis of ATP in the presence of single-stranded DNA, the ATP-dependent uptake of single-stranded DNA by duplex DNA, and the ATP-dependent hybridization of homologous single-stranded DNAs. It interacts with LexA causing its activation and leading to its autocatalytic cleavage. The sequence is that of Protein RecA, chromosomal from Lactococcus lactis subsp. lactis (strain IL1403) (Streptococcus lactis).